A 540-amino-acid chain; its full sequence is FAD-binding monooxygenase lolF1 (540 aa).

FAD-binding positions include 43 to 46 (VWRE) and 55 to 58 (DSLF). NADP(+)-binding positions include 53–55 (AVD), 182–188 (TGPSGVQ), and 205–206 (QS).

It belongs to the FAD-binding monooxygenase family. The cofactor is FAD.

Its pathway is alkaloid biosynthesis. FAD-binding monooxygenase; part of the gene cluster that mediates the biosynthesis of loline alkaloids, potent insecticidal agents composed of a pyrrolizidine ring system and an uncommon ether bridge linking carbons 2 and 7. Lolines are structurally differentiated by the various modifications of the L-amino group and include norloline, loline, N-methylloline, N-acetylloline, N-acetylnorloline, and N-formylloline. The first committed step is the condensation of O-acetyl-L-homoserine (derived from L-aspartic acid) and L-proline, probably catalyzed by the gamma-type pyridoxal 5'-phosphate(PLP)-dependent enzyme lolC, to give the diamino diacid, NACPP. Ensuing cyclization, decarboxylation, and acetylation steps yield 1-exo-acetamidopyrrolizidine (AcAP). LolO is required for installation of the ether bridge upon the pathway intermediate, 1-exo-acetamidopyrrolizidine (AcAP). In sequential 2-oxoglutarate- and O(2)-consuming steps, lolO removes hydrogens from C2 and C7 of AcAP to form both carbon-oxygen bonds in N-acetylnorloline (NANL), the precursor to all other lolines. The enzymes lolD, lolE, lolF and lolT have also been proposed to be involved in the ether-bridge installation. Further processing of the exocyclic moiety of NANL by fungal N-acetamidase (LolN), methyltransferase (LolM), and cytochrome P450 (LolP) enzymes, with occasional involvement of a plant acetyltransferase, generates the other known lolines. LolN transforms NANL to norlonine which is monomethylated and dimethylated to respectively lonine and N-methyllonine (NML) by lolM. LolP catalyzes hydroxylation of the methyl group in N-methylloline (NML) and further oxygenation to N-formylloline (NFL). A plant acetyltransferase is responsible for the acetylation of loline to form N-acetylloline (NAL). LolA might interact with aspartate kinase to prevent feedback inhibition of its activity by these end products and thereby promote production of L-homoserine from L-aspartate. The protein is FAD-binding monooxygenase lolF1 of Epichloe uncinata (Endophyte fungus).